Consider the following 200-residue polypeptide: Pyrrolidone-carboxylate peptidase (200 aa).

Catalysis depends on residues Glu78, Cys141, and His165.

It belongs to the peptidase C15 family. In terms of assembly, homotetramer.

The protein localises to the cytoplasm. The enzyme catalyses Release of an N-terminal pyroglutamyl group from a polypeptide, the second amino acid generally not being Pro.. Its function is as follows. Removes 5-oxoproline from various penultimate amino acid residues except L-proline. The protein is Pyrrolidone-carboxylate peptidase of Thermococcus onnurineus (strain NA1).